The chain runs to 83 residues: ATP synthase subunit c, chloroplastic (83 aa).

A run of 2 helical transmembrane segments spans residues 3–23 (PLIA…AAIG) and 57–77 (FAFM…LLFA).

It belongs to the ATPase C chain family. As to quaternary structure, F-type ATPases have 2 components, F(1) - the catalytic core - and F(0) - the membrane proton channel. F(1) has five subunits: alpha(3), beta(3), gamma(1), delta(1), epsilon(1). F(0) has four main subunits: a(1), b(1), b'(1) and c(10-14). The alpha and beta chains form an alternating ring which encloses part of the gamma chain. F(1) is attached to F(0) by a central stalk formed by the gamma and epsilon chains, while a peripheral stalk is formed by the delta, b and b' chains.

The protein resides in the plastid. The protein localises to the chloroplast thylakoid membrane. Functionally, f(1)F(0) ATP synthase produces ATP from ADP in the presence of a proton or sodium gradient. F-type ATPases consist of two structural domains, F(1) containing the extramembraneous catalytic core and F(0) containing the membrane proton channel, linked together by a central stalk and a peripheral stalk. During catalysis, ATP synthesis in the catalytic domain of F(1) is coupled via a rotary mechanism of the central stalk subunits to proton translocation. Its function is as follows. Key component of the F(0) channel; it plays a direct role in translocation across the membrane. A homomeric c-ring of between 10-14 subunits forms the central stalk rotor element with the F(1) delta and epsilon subunits. The chain is ATP synthase subunit c, chloroplastic from Oedogonium cardiacum (Filamentous green alga).